A 311-amino-acid polypeptide reads, in one-letter code: Methionyl-tRNA formyltransferase (311 aa).

(6S)-5,6,7,8-tetrahydrofolate is bound at residue 112–115; it reads SLLP.

It belongs to the Fmt family.

It catalyses the reaction L-methionyl-tRNA(fMet) + (6R)-10-formyltetrahydrofolate = N-formyl-L-methionyl-tRNA(fMet) + (6S)-5,6,7,8-tetrahydrofolate + H(+). In terms of biological role, attaches a formyl group to the free amino group of methionyl-tRNA(fMet). The formyl group appears to play a dual role in the initiator identity of N-formylmethionyl-tRNA by promoting its recognition by IF2 and preventing the misappropriation of this tRNA by the elongation apparatus. The polypeptide is Methionyl-tRNA formyltransferase (Agrobacterium fabrum (strain C58 / ATCC 33970) (Agrobacterium tumefaciens (strain C58))).